We begin with the raw amino-acid sequence, 404 residues long: Tryptophan synthase beta chain (404 aa).

Lys-98 carries the N6-(pyridoxal phosphate)lysine modification.

Belongs to the TrpB family. As to quaternary structure, tetramer of two alpha and two beta chains. Pyridoxal 5'-phosphate is required as a cofactor.

The enzyme catalyses (1S,2R)-1-C-(indol-3-yl)glycerol 3-phosphate + L-serine = D-glyceraldehyde 3-phosphate + L-tryptophan + H2O. It participates in amino-acid biosynthesis; L-tryptophan biosynthesis; L-tryptophan from chorismate: step 5/5. Functionally, the beta subunit is responsible for the synthesis of L-tryptophan from indole and L-serine. This is Tryptophan synthase beta chain from Rhodopseudomonas palustris (strain ATCC BAA-98 / CGA009).